The chain runs to 297 residues: N-acetylneuraminate lyase (297 aa).

The aceneuramate site is built by Ser-47 and Thr-48. The active-site Proton donor is Tyr-137. Lys-165 (schiff-base intermediate with substrate) is an active-site residue. The aceneuramate site is built by Thr-167, Gly-189, Asp-191, Glu-192, and Ser-208.

The protein belongs to the DapA family. NanA subfamily. In terms of assembly, homotetramer.

It localises to the cytoplasm. The enzyme catalyses aceneuramate = aldehydo-N-acetyl-D-mannosamine + pyruvate. The protein operates within amino-sugar metabolism; N-acetylneuraminate degradation; D-fructose 6-phosphate from N-acetylneuraminate: step 1/5. In terms of biological role, catalyzes the reversible aldol cleavage of N-acetylneuraminic acid (sialic acid; Neu5Ac) to form pyruvate and N-acetylmannosamine (ManNAc) via a Schiff base intermediate. This is N-acetylneuraminate lyase from Salmonella paratyphi A (strain AKU_12601).